Reading from the N-terminus, the 1381-residue chain is Peroxisomal ATPase PEX6 (1381 aa).

Polar residues predominate over residues 1–10; that stretch reads MTAPNSTPAS. Disordered regions lie at residues 1–23, 247–315, 333–374, and 467–499; these read MTAP…QDKP, VRTS…DNLS, TVTG…DRPR, and YSSR…NPPA. The span at 11–20 shows a compositional bias: basic residues; it reads SRKRVRRRRQ. Acidic residues-rich tracts occupy residues 270-284 and 296-315; these read AEDD…AEED and TDAD…DNLS. Polar residues-rich tracts occupy residues 333-345, 355-367, and 487-499; these read TVTG…TGTP, GPGS…TATT, and FFEA…NPPA. 1031–1038 serves as a coordination point for ATP; sequence GPPGTGKT. 2 stretches are compositionally biased toward basic and acidic residues: residues 1294-1305 and 1337-1350; these read GAKDKDKKKEGA and STKK…KAAD. Positions 1294–1381 are disordered; sequence GAKDKDKKKE…GGDEDEGLYD (88 aa). The span at 1372-1381 shows a compositional bias: acidic residues; sequence GGDEDEGLYD.

This sequence belongs to the AAA ATPase family. In terms of assembly, interacts with PEX1; forming the PEX1-PEX6 AAA ATPase complex, which is composed of a heterohexamer formed by a trimer of PEX1-PEX6 dimers.

The protein localises to the cytoplasm. Its subcellular location is the cytosol. It localises to the peroxisome membrane. The enzyme catalyses ATP + H2O = ADP + phosphate + H(+). Its function is as follows. Component of the PEX1-PEX6 AAA ATPase complex, a protein dislocase complex that mediates the ATP-dependent extraction of the PEX5 receptor from peroxisomal membranes, an essential step for PEX5 recycling. Specifically recognizes PEX5 monoubiquitinated at 'Cys-6', and pulls it out of the peroxisome lumen through the PEX2-PEX10-PEX12 retrotranslocation channel. Extraction by the PEX1-PEX6 AAA ATPase complex is accompanied by unfolding of the TPR repeats and release of bound cargo from PEX5. This Neurospora crassa (strain ATCC 24698 / 74-OR23-1A / CBS 708.71 / DSM 1257 / FGSC 987) protein is Peroxisomal ATPase PEX6 (pex-6).